The following is a 348-amino-acid chain: UDP-glucose 4-epimerase (348 aa).

Thr125 lines the substrate pocket. The Proton acceptor role is filled by Tyr149.

The protein belongs to the NAD(P)-dependent epimerase/dehydratase family. It depends on NAD(+) as a cofactor.

It carries out the reaction UDP-alpha-D-glucose = UDP-alpha-D-galactose. It functions in the pathway carbohydrate metabolism; galactose metabolism. It participates in glycan metabolism; exopolysaccharide biosynthesis. The chain is UDP-glucose 4-epimerase (exoB) from Azospirillum brasilense.